The chain runs to 260 residues: tRNA pseudouridine synthase A (260 aa).

The Nucleophile role is filled by Asp-52. Substrate is bound at residue Tyr-111.

The protein belongs to the tRNA pseudouridine synthase TruA family. Homodimer.

It catalyses the reaction uridine(38/39/40) in tRNA = pseudouridine(38/39/40) in tRNA. Formation of pseudouridine at positions 38, 39 and 40 in the anticodon stem and loop of transfer RNAs. The chain is tRNA pseudouridine synthase A from Beijerinckia indica subsp. indica (strain ATCC 9039 / DSM 1715 / NCIMB 8712).